Reading from the N-terminus, the 296-residue chain is Protoheme IX farnesyltransferase (296 aa).

The Cytoplasmic portion of the chain corresponds to 1-9; sequence MMFKQYLQV. Residues 10–28 form a helical membrane-spanning segment; that stretch reads TKPGIIFGNLISVIGGFLL. Residues 29–37 lie on the Periplasmic side of the membrane; sequence ASKGSIDYP. A helical membrane pass occupies residues 38–56; sequence LFIYTLVGVSLVVASGCVF. Residues 57–78 lie on the Cytoplasmic side of the membrane; the sequence is NNYIDRDIDRKMERTKNRVLVK. The chain crosses the membrane as a helical span at residues 79 to 97; that stretch reads GLISPAVSLVYATLLGIAG. Topologically, residues 98–107 are periplasmic; it reads FMLLWFGANP. Residues 108–126 traverse the membrane as a helical segment; sequence LACWLGVMGFVVYVGVYSL. At 127 to 197 the chain is on the cytoplasmic side; that stretch reads YMKRHSVYGT…YQAANIPVLP (71 aa). The helical transmembrane segment at 198–216 threads the bilayer; that stretch reads VVKGISVAKNHITLYIIAF. Topologically, residues 217–228 are periplasmic; the sequence is AVATLMLSLGGY. The chain crosses the membrane as a helical span at residues 229-247; that stretch reads AGYKYLVVAAAVSVWWLGM. Residues 248 to 268 are Cytoplasmic-facing; that stretch reads ALRGYKVADDRIWARKLFGFS. The chain crosses the membrane as a helical span at residues 269–287; the sequence is IIAITALSVMMSVDFMVPD. Residues 288–296 lie on the Periplasmic side of the membrane; the sequence is SHTLLAAVW.

The protein belongs to the UbiA prenyltransferase family. Protoheme IX farnesyltransferase subfamily.

Its subcellular location is the cell inner membrane. It catalyses the reaction heme b + (2E,6E)-farnesyl diphosphate + H2O = Fe(II)-heme o + diphosphate. It functions in the pathway porphyrin-containing compound metabolism; heme O biosynthesis; heme O from protoheme: step 1/1. Its function is as follows. Converts heme B (protoheme IX) to heme O by substitution of the vinyl group on carbon 2 of heme B porphyrin ring with a hydroxyethyl farnesyl side group. This is Protoheme IX farnesyltransferase from Shigella flexneri.